A 307-amino-acid chain; its full sequence is Aspartate carbamoyltransferase catalytic subunit (307 aa).

Residues Arg55 and Thr56 each coordinate carbamoyl phosphate. Lys85 is a binding site for L-aspartate. Arg106, His135, and Gln138 together coordinate carbamoyl phosphate. The L-aspartate site is built by Arg168 and Arg230. Leu268 and Pro269 together coordinate carbamoyl phosphate.

The protein belongs to the aspartate/ornithine carbamoyltransferase superfamily. ATCase family. As to quaternary structure, heterododecamer (2C3:3R2) of six catalytic PyrB chains organized as two trimers (C3), and six regulatory PyrI chains organized as three dimers (R2).

The enzyme catalyses carbamoyl phosphate + L-aspartate = N-carbamoyl-L-aspartate + phosphate + H(+). It participates in pyrimidine metabolism; UMP biosynthesis via de novo pathway; (S)-dihydroorotate from bicarbonate: step 2/3. Functionally, catalyzes the condensation of carbamoyl phosphate and aspartate to form carbamoyl aspartate and inorganic phosphate, the committed step in the de novo pyrimidine nucleotide biosynthesis pathway. The chain is Aspartate carbamoyltransferase catalytic subunit from Photorhabdus laumondii subsp. laumondii (strain DSM 15139 / CIP 105565 / TT01) (Photorhabdus luminescens subsp. laumondii).